Reading from the N-terminus, the 102-residue chain is Biotrophy-associated secreted protein 4 (102 aa).

The first 21 residues, Met-1 to Ala-21, serve as a signal peptide directing secretion. Asn-36 carries N-linked (GlcNAc...) asparagine glycosylation.

The protein localises to the secreted. Functionally, secreted effector involved in biotrophic colonization of plant cells. Participates in transition from the biotrophic to the necrotrophic phase of Magnaporthe oryzae. Elicits rice basic defense responses during the early stage of interaction and promotes cell death in the late stage of compatible interaction. The polypeptide is Biotrophy-associated secreted protein 4 (Pyricularia oryzae (strain 70-15 / ATCC MYA-4617 / FGSC 8958) (Rice blast fungus)).